Consider the following 1050-residue polypeptide: DNA ligase 4 (1050 aa).

The tract at residues 1–22 (MNTNRRSRSPDEEALEEDQHQY) is disordered. The ATP site is built by glutamate 329, lysine 331, leucine 332, arginine 336, glutamate 398, phenylalanine 438, glutamate 498, lysine 503, lysine 520, and lysine 522. Lysine 331 (N6-AMP-lysine intermediate) is an active-site residue. Residue glutamate 398 coordinates Mg(2+). Position 498 (glutamate 498) interacts with Mg(2+). The segment covering 691-702 (QEQERKKMEMEN) has biased composition (basic and acidic residues). The segment at 691–711 (QEQERKKMEMENRKRKPATKR) is disordered. BRCT domains are found at residues 742-840 (ASKR…KENK) and 936-1049 (LRSF…EYVA).

This sequence belongs to the ATP-dependent DNA ligase family. The cofactor is Mg(2+).

Its subcellular location is the nucleus. The catalysed reaction is ATP + (deoxyribonucleotide)n-3'-hydroxyl + 5'-phospho-(deoxyribonucleotide)m = (deoxyribonucleotide)n+m + AMP + diphosphate.. In terms of biological role, DNA ligase involved in DNA non-homologous end joining (NHEJ); required for double-strand break (DSB) repair. The protein is DNA ligase 4 (mus-53) of Neurospora crassa (strain ATCC 24698 / 74-OR23-1A / CBS 708.71 / DSM 1257 / FGSC 987).